The chain runs to 537 residues: ESX-2 secretion system protein EccE2 (537 aa).

The chain crosses the membrane as a helical span at residues 31–51; the sequence is ALGGQLGAVMAVVVGVALVFV.

Belongs to the EccE family. Could be part of the ESX-2 / type VII secretion system (T7SS), which is composed of cytosolic and membrane components.

The protein resides in the cell membrane. This chain is ESX-2 secretion system protein EccE2 (eccE2), found in Mycobacterium tuberculosis (strain CDC 1551 / Oshkosh).